The following is a 248-amino-acid chain: MTMSSYLINSNYIEPSFPPCDEYQQSGYIPNPGDYYERPKDTGFPHHDEPSYPRSNYTESGYDYGNVPATGLDDFGDGHHAQPQPVPQSHGPRLTAAPDGGAGANASKDCSLASEVYPGVAKGKEPVVYPWMKKVHVSTVNASYTGGVPKRSRTAYTRQQALELEKEFHFNRYLTRRRRVEIAHTMCLSERQVKIWFQNRRMKWKKEHKLPNTKIRSSSSASSSASGAQQQQIKTGQQLVPTPCTAGL.

The interval 23-107 (YQQSGYIPNP…PDGGAGANAS (85 aa)) is disordered. Positions 35 to 51 (YYERPKDTGFPHHDEPS) are enriched in basic and acidic residues. The short motif at 128–133 (VYPWMK) is the Antp-type hexapeptide element. A DNA-binding region (homeobox) is located at residues 149–208 (PKRSRTAYTRQQALELEKEFHFNRYLTRRRRVEIAHTMCLSERQVKIWFQNRRMKWKKEH). Residues 207–248 (EHKLPNTKIRSSSSASSSASGAQQQQIKTGQQLVPTPCTAGL) form a disordered region. The span at 217 to 238 (SSSSASSSASGAQQQQIKTGQQ) shows a compositional bias: low complexity.

It belongs to the Antp homeobox family. Deformed subfamily.

Its subcellular location is the nucleus. Functionally, sequence-specific transcription factor which is part of a developmental regulatory system that provides cells with specific positional identities on the anterior-posterior axis. In Morone saxatilis (Striped bass), this protein is Homeobox protein Hox-A4 (hoxa4).